The chain runs to 368 residues: Agmatine deiminase (368 aa).

Cys357 functions as the Amidino-cysteine intermediate in the catalytic mechanism.

The protein belongs to the agmatine deiminase family. Homodimer.

The enzyme catalyses agmatine + H2O = N-carbamoylputrescine + NH4(+). The protein operates within amine and polyamine biosynthesis; putrescine biosynthesis via agmatine pathway; N-carbamoylputrescine from agmatine: step 1/1. Its function is as follows. Mediates the hydrolysis of agmatine into N-carbamoylputrescine in the arginine decarboxylase (ADC) pathway of putrescine biosynthesis, a basic polyamine. This Pseudomonas aeruginosa (strain UCBPP-PA14) protein is Agmatine deiminase.